Reading from the N-terminus, the 286-residue chain is Ribose-phosphate pyrophosphokinase (286 aa).

ATP is bound by residues 34 to 36 (DGE) and 91 to 93 (RQH). Positions 124 and 161 each coordinate Mg(2+). Residue Lys-184 is part of the active site. D-ribose 5-phosphate-binding positions include Arg-186, Asp-210, and 214–218 (STGGT).

Belongs to the ribose-phosphate pyrophosphokinase family. Class III (archaeal) subfamily. As to quaternary structure, homodimer. Requires Mg(2+) as cofactor.

Its subcellular location is the cytoplasm. The catalysed reaction is D-ribose 5-phosphate + ATP = 5-phospho-alpha-D-ribose 1-diphosphate + AMP + H(+). It functions in the pathway metabolic intermediate biosynthesis; 5-phospho-alpha-D-ribose 1-diphosphate biosynthesis; 5-phospho-alpha-D-ribose 1-diphosphate from D-ribose 5-phosphate (route I): step 1/1. Functionally, involved in the biosynthesis of the central metabolite phospho-alpha-D-ribosyl-1-pyrophosphate (PRPP) via the transfer of pyrophosphoryl group from ATP to 1-hydroxyl of ribose-5-phosphate (Rib-5-P). The protein is Ribose-phosphate pyrophosphokinase of Thermoplasma volcanium (strain ATCC 51530 / DSM 4299 / JCM 9571 / NBRC 15438 / GSS1).